Consider the following 532-residue polypeptide: Flavin-containing monooxygenase 1 (532 aa).

The Lumenal segment spans residues 1–510 (MVKRVAIVGA…TRTIQESPSS (510 aa)). Residues 9 to 13 (GAGVS), glutamate 32, 40 to 41 (LW), and 61 to 62 (NS) each bind FAD. Residues 60-61 (SN) and 195-198 (SGTD) each bind NADP(+). A helical transmembrane segment spans residues 511-531 (FETLLKLFSFLALLIAVFLIF). Residue leucine 532 is a topological domain, cytoplasmic.

It belongs to the FMO family. It depends on FAD as a cofactor. In terms of tissue distribution, liver.

The protein localises to the endoplasmic reticulum membrane. It carries out the reaction hypotaurine + NADPH + O2 + H(+) = taurine + NADP(+) + H2O. It catalyses the reaction hypotaurine + NADH + O2 + H(+) = taurine + NAD(+) + H2O. The catalysed reaction is trimethylamine + NADPH + O2 = trimethylamine N-oxide + NADP(+) + H2O. The enzyme catalyses N,N-dimethylaniline + NADPH + O2 + H(+) = N,N-dimethylaniline N-oxide + NADP(+) + H2O. Its function is as follows. Broad spectrum monooxygenase that catalyzes the oxygenation of a wide variety of nitrogen- and sulfur-containing compounds including xenobiotics. Catalyzes the S-oxygenation of hypotaurine to produce taurine, an organic osmolyte involved in cell volume regulation as well as a variety of cytoprotective and developmental processes. In vitro, catalyzes the N-oxygenation of trimethylamine (TMA) to produce trimethylamine N-oxide (TMAO) and could therefore participate to the detoxification of this compound that is generated by the action of gut microbiota from dietary precursors such as choline, choline containing compounds, betaine or L-carnitine. This is Flavin-containing monooxygenase 1 from Mus musculus (Mouse).